A 105-amino-acid polypeptide reads, in one-letter code: Large ribosomal subunit protein uL24 (105 aa).

The protein belongs to the universal ribosomal protein uL24 family. In terms of assembly, part of the 50S ribosomal subunit.

Its function is as follows. One of two assembly initiator proteins, it binds directly to the 5'-end of the 23S rRNA, where it nucleates assembly of the 50S subunit. Functionally, one of the proteins that surrounds the polypeptide exit tunnel on the outside of the subunit. This chain is Large ribosomal subunit protein uL24, found in Rhizorhabdus wittichii (strain DSM 6014 / CCUG 31198 / JCM 15750 / NBRC 105917 / EY 4224 / RW1) (Sphingomonas wittichii).